The primary structure comprises 388 residues: Succinate--CoA ligase [ADP-forming] subunit beta (388 aa).

The ATP-grasp domain occupies 9–244 (KQLFAEYGLP…PSQDDPREAH (236 aa)). ATP contacts are provided by residues Lys-46, 53–55 (GRG), Glu-99, Thr-102, and Glu-107. The Mg(2+) site is built by Asn-199 and Asp-213. Residues Asn-264 and 321 to 323 (GIV) each bind substrate.

The protein belongs to the succinate/malate CoA ligase beta subunit family. In terms of assembly, heterotetramer of two alpha and two beta subunits. The cofactor is Mg(2+).

It carries out the reaction succinate + ATP + CoA = succinyl-CoA + ADP + phosphate. The enzyme catalyses GTP + succinate + CoA = succinyl-CoA + GDP + phosphate. It participates in carbohydrate metabolism; tricarboxylic acid cycle; succinate from succinyl-CoA (ligase route): step 1/1. Its function is as follows. Succinyl-CoA synthetase functions in the citric acid cycle (TCA), coupling the hydrolysis of succinyl-CoA to the synthesis of either ATP or GTP and thus represents the only step of substrate-level phosphorylation in the TCA. The beta subunit provides nucleotide specificity of the enzyme and binds the substrate succinate, while the binding sites for coenzyme A and phosphate are found in the alpha subunit. In Pseudomonas putida (strain GB-1), this protein is Succinate--CoA ligase [ADP-forming] subunit beta.